Reading from the N-terminus, the 307-residue chain is UAP56-interacting factor (307 aa).

The span at 1–25 (MSGFGAAALLSGSSAAAGTRSGSSD) shows a compositional bias: low complexity. Disordered stretches follow at residues 1 to 28 (MSGF…DSLE) and 41 to 85 (NKKE…KNHL). Residues 26-44 (SLEKIDMSLDDIIKLNKKE) carry the UAP56-binding motif motif. Polar residues predominate over residues 57–78 (LQQNRTQQFRTPGSKWGIQQQK).

It belongs to the UIF family. In terms of tissue distribution, widely expressed.

The protein localises to the nucleus. It localises to the nucleoplasm. The protein resides in the nucleus speckle. Functionally, required for mRNA export from the nucleus to the cytoplasm. Acts as an adapter that uses the DDX39B/UAP56-NFX1 pathway to ensure efficient mRNA export and delivering to the nuclear pore. This is UAP56-interacting factor (FYTTD1) from Gallus gallus (Chicken).